Here is a 45-residue protein sequence, read N- to C-terminus: Photosystem II reaction center protein K (45 aa).

Residues Met-1–Ala-8 constitute a propeptide that is removed on maturation. Residues Met-24–Phe-44 traverse the membrane as a helical segment.

This sequence belongs to the PsbK family. As to quaternary structure, PSII is composed of 1 copy each of membrane proteins PsbA, PsbB, PsbC, PsbD, PsbE, PsbF, PsbH, PsbI, PsbJ, PsbK, PsbL, PsbM, PsbT, PsbX, PsbY, PsbZ, Psb30/Ycf12, peripheral proteins PsbO, CyanoQ (PsbQ), PsbU, PsbV and a large number of cofactors. It forms dimeric complexes.

It is found in the cellular thylakoid membrane. In terms of biological role, one of the components of the core complex of photosystem II (PSII). PSII is a light-driven water:plastoquinone oxidoreductase that uses light energy to abstract electrons from H(2)O, generating O(2) and a proton gradient subsequently used for ATP formation. It consists of a core antenna complex that captures photons, and an electron transfer chain that converts photonic excitation into a charge separation. The sequence is that of Photosystem II reaction center protein K from Acaryochloris marina (strain MBIC 11017).